The following is a 745-amino-acid chain: 5-methyltetrahydropteroyltriglutamate--homocysteine methyltransferase (745 aa).

5-methyltetrahydropteroyltri-L-glutamate contacts are provided by residues 17-20 and K111; that span reads RELK. Residues 421–423 and E474 each bind L-homocysteine; that span reads IGS. Residues 421-423 and E474 contribute to the L-methionine site; that span reads IGS. 5-methyltetrahydropteroyltri-L-glutamate is bound by residues 505-506 and W551; that span reads RC. D589 is an L-homocysteine binding site. D589 lines the L-methionine pocket. E595 is a binding site for 5-methyltetrahydropteroyltri-L-glutamate. Zn(2+)-binding residues include H631, C633, and E655. H684 (proton donor) is an active-site residue. C716 provides a ligand contact to Zn(2+).

This sequence belongs to the vitamin-B12 independent methionine synthase family. The cofactor is Zn(2+).

The catalysed reaction is 5-methyltetrahydropteroyltri-L-glutamate + L-homocysteine = tetrahydropteroyltri-L-glutamate + L-methionine. Its pathway is amino-acid biosynthesis; L-methionine biosynthesis via de novo pathway; L-methionine from L-homocysteine (MetE route): step 1/1. In terms of biological role, catalyzes the transfer of a methyl group from 5-methyltetrahydrofolate to homocysteine resulting in methionine formation. This is 5-methyltetrahydropteroyltriglutamate--homocysteine methyltransferase from Thermodesulfovibrio yellowstonii (strain ATCC 51303 / DSM 11347 / YP87).